The chain runs to 527 residues: uncharacterized protein (527 aa).

4 disordered regions span residues 1 to 49 (MSSF…IKDE), 99 to 307 (DFNF…ATTT), 319 to 353 (TEINNNNSNSNNLPSIPIGNEKSKINDNQDEEDEN), and 382 to 419 (YINNDDGDDDDDDDENENENDSQPEEEYEENKQQQQQE). The segment covering 8–17 (YDDESEEEDN) has biased composition (acidic residues). Composition is skewed to low complexity over residues 18 to 44 (NNNNNNNNNNNNNNIINNNNNNNNSNN) and 99 to 115 (DFNFYNNNNNSNSNSNN). Over residues 141-150 (NEFRNPDLKN) the composition is skewed to basic and acidic residues. Low complexity-rich tracts occupy residues 167-178 (SSQNTTTTQQSS) and 186-222 (NNNNNNNNNNNNNNNNNNNNNNNNNNNNNNNNNNSNN). Residues 229–248 (DDKSKKINENENTVNKKDNI) are compositionally biased toward basic and acidic residues. The segment covering 283 to 296 (LRKKLLKNQPKTKK) has biased composition (basic residues). Composition is skewed to low complexity over residues 297–307 (STTTTTTATTT) and 319–330 (TEINNNNSNSNN). A compositionally biased stretch (acidic residues) spans 386-410 (DDGDDDDDDDENENENDSQPEEEYE).

This is an uncharacterized protein from Dictyostelium discoideum (Social amoeba).